Consider the following 439-residue polypeptide: Maintenance of mitochondrial morphology protein 1 (439 aa).

The Lumenal segment spans residues 1–76 (MSQDLIETTA…NGNTWSFTQG (76 aa)). Residues 77-97 (LVIGQVSVIFIIIVFVKFFVF) form a helical membrane-spanning segment. Residues 98–439 (ADSSSHIPTK…TPGEYVNSNI (342 aa)) are Cytoplasmic-facing. Disordered stretches follow at residues 125–145 (KHSN…SLDS), 309–336 (MNGY…DGGT), and 405–425 (REPV…GTSA). Residues 165–395 (ASESLDWFNV…EPRFQVVRLP (231 aa)) form the SMP-LTD domain. 2 stretches are compositionally biased toward low complexity: residues 315 to 326 (ENANGDGASSSN) and 410 to 424 (KKTT…NGTS).

This sequence belongs to the MMM1 family. Homodimer. Component of the ER-mitochondria encounter structure (ERMES) or MDM complex, composed of MMM1, MDM10, MDM12 and MDM34. An MMM1 homodimer associates with one molecule of MDM12 on each side in a pairwise head-to-tail manner, and the SMP-LTD domains of MMM1 and MDM12 generate a continuous hydrophobic tunnel for phospholipid trafficking.

The protein resides in the endoplasmic reticulum membrane. Its function is as follows. Component of the ERMES/MDM complex, which serves as a molecular tether to connect the endoplasmic reticulum (ER) and mitochondria. Components of this complex are involved in the control of mitochondrial shape and protein biogenesis, and function in nonvesicular lipid trafficking between the ER and mitochondria. The MDM12-MMM1 subcomplex functions in the major beta-barrel assembly pathway that is responsible for biogenesis of all outer membrane beta-barrel proteins, and acts in a late step after the SAM complex. The MDM10-MDM12-MMM1 subcomplex further acts in the TOM40-specific pathway after the action of the MDM12-MMM1 complex. Essential for establishing and maintaining the structure of mitochondria and maintenance of mtDNA nucleoids. The polypeptide is Maintenance of mitochondrial morphology protein 1 (Candida albicans (strain SC5314 / ATCC MYA-2876) (Yeast)).